The sequence spans 475 residues: Ribulose bisphosphate carboxylase large chain (475 aa).

The propeptide occupies 1-2; that stretch reads MS. Residue Pro3 is modified to N-acetylproline. Lys14 carries the post-translational modification N6,N6,N6-trimethyllysine. Substrate-binding residues include Asn123 and Thr173. Lys175 functions as the Proton acceptor in the catalytic mechanism. A substrate-binding site is contributed by Lys177. 3 residues coordinate Mg(2+): Lys201, Asp203, and Glu204. Position 201 is an N6-carboxylysine (Lys201). Catalysis depends on His294, which acts as the Proton acceptor. Residues Arg295, His327, and Ser379 each contribute to the substrate site.

This sequence belongs to the RuBisCO large chain family. Type I subfamily. In terms of assembly, heterohexadecamer of 8 large chains and 8 small chains; disulfide-linked. The disulfide link is formed within the large subunit homodimers. Requires Mg(2+) as cofactor. Post-translationally, the disulfide bond which can form in the large chain dimeric partners within the hexadecamer appears to be associated with oxidative stress and protein turnover.

Its subcellular location is the plastid. The protein localises to the chloroplast. It carries out the reaction 2 (2R)-3-phosphoglycerate + 2 H(+) = D-ribulose 1,5-bisphosphate + CO2 + H2O. The enzyme catalyses D-ribulose 1,5-bisphosphate + O2 = 2-phosphoglycolate + (2R)-3-phosphoglycerate + 2 H(+). In terms of biological role, ruBisCO catalyzes two reactions: the carboxylation of D-ribulose 1,5-bisphosphate, the primary event in carbon dioxide fixation, as well as the oxidative fragmentation of the pentose substrate in the photorespiration process. Both reactions occur simultaneously and in competition at the same active site. This Pinus longaeva (Great Basin bristlecone pine) protein is Ribulose bisphosphate carboxylase large chain.